Here is a 498-residue protein sequence, read N- to C-terminus: Cytochrome P450 monooxygenase 71 (498 aa).

Residues 7-24 (YVFALLGILATLYFVRWS) form a helical membrane-spanning segment. Asn-425 carries an N-linked (GlcNAc...) asparagine glycan. Cys-440 is a heme binding site.

The protein belongs to the cytochrome P450 family. Heme serves as cofactor.

The protein localises to the membrane. The protein operates within secondary metabolite biosynthesis. Its function is as follows. Cytochrome P450 monooxygenase that is able to use dehydroabietic acid and testosterone as substrates for oxidation, suggesting that the natural substrate(s) may be structurally related to steroid compounds. The polypeptide is Cytochrome P450 monooxygenase 71 (Postia placenta (strain ATCC 44394 / Madison 698-R) (Brown rot fungus)).